We begin with the raw amino-acid sequence, 1307 residues long: CRISPR-associated endonuclease Cas12a (1307 aa).

The segment at 1 to 35 (MTQFEGFTNLYQVSKTLRFELIPQGKTLKHIQEQG) is WED-I (OBD-I). Positions 36–320 (FIEEDKARND…SDRNTLSFIL (285 aa)) are REC1 (helical-I). 47–51 (YKELK) contacts crRNA. A coiled-coil region spans residues 74–106 (ENLSAAIDSYRKEKTEETRNALIEEQATYRNAI). CrRNA contacts are provided by residues 175 to 176 (NR) and 307 to 310 (KQIL). The interval 321–526 (EEFKSDEEVI…ARNYATKKPY (206 aa)) is WED-II (helical-II). Positions 527–598 (SVEKFKLNFQ…GFDKMYYDYF (72 aa)) are WED-II (OBD-I). The segment at residues 599-607 (PDAAKMIPK) is a DNA-binding region (PAM-binding on target DNA). Residues 599–718 (PDAAKMIPKC…EYYAELNPLL (120 aa)) form a PI (LHD) region. A WED-III (OBD-III) region spans residues 719-884 (YHISFQRIAE…ITLNYQAANS (166 aa)). 752 to 761 (KGHHGKPNLH) provides a ligand contact to crRNA. The target DNA DNA-binding region spans 780–783 (KLNG). His-800 acts as the For pre-crRNA processing in catalysis. Residue 806–808 (MLN) coordinates crRNA. Catalysis depends on for pre-crRNA processing residues Lys-809 and Lys-860. Residues 885-940 (PSKFNQRVNAYLKEHPETPIIGIDRGERNLIYITVIDSTGKILEQRSLNTIQQFDY) form a ruvC-I region. Catalysis depends on Asp-908, which acts as the For DNase activity of RuvC domain. The bridge helix stretch occupies residues 941-957 (QKKLDNREKERVAARQA). A DNA-binding region (target DNA) is located at residues 951–968 (RVAARQAWSVVGTIKDLK). The tract at residues 958-1066 (WSVVGTIKDL…TQSGFLFYVP (109 aa)) is ruvC-II. The For DNase activity of RuvC domain role is filled by Glu-993. Positions 1051 to 1053 (SFA) form a DNA-binding region, target DNA. Residues 1067–1262 (APYTSKIDPL…FQNPEWPMDA (196 aa)) are nuclease domain. The active-site For DNase activity of nuclease domain is the Arg-1226. Asp-1263 (for DNase activity of RuvC domain) is an active-site residue. The tract at residues 1263–1307 (DANGAYHIALKGQLLLNHLKESKDLKLQNGISNQDWLAYIQELRN) is ruvC-III.

The protein belongs to the CRISPR-associated endonuclease Cas12a family. In terms of assembly, monomer. Mg(2+) serves as cofactor.

The enzyme catalyses Endonucleolytic cleavage to 5'-phosphodinucleotide and 5'-phosphooligonucleotide end-products.. The catalysed reaction is RNA = a 5'-hydroxy-ribonucleotide + n nucleoside-2',3'-cyclophosphates.. CRISPR (clustered regularly interspaced short palindromic repeat), is an adaptive immune system that provides protection against mobile genetic elements (viruses, transposable elements and conjugative plasmids). CRISPR clusters contain sequences complementary to antecedent mobile elements and target invading nucleic acids. CRISPR clusters are transcribed and processed into CRISPR RNA (crRNA). Recognizes a short motif in the CRISPR repeat sequences (the 5' PAM or protospacer adjacent motif, TTTN in this organism) to help distinguish self versus nonself, as targets within the bacterial CRISPR locus do not have PAMs. Has dsDNA endonuclease activity, results in staggered 4-base 5' overhangs 19 and 22 bases downstream of the PAM on the non-targeted and targeted strand respectively. Non-target strand cleavage by the RuvC domain is probably a prerequisite of target strand cleavage by the Nuc domain. Protects E.coli against plasmids and bacteriophage M13mp18, phage T4 with hydroxymethyl or unmodified (but not glycosylated) cytosines and to a lesser extent against lambda and VpaE1 phage. In this CRISPR system correct processing of pre-crRNA requires only this protein and the CRISPR locus. This is CRISPR-associated endonuclease Cas12a from Acidaminococcus sp. (strain BV3L6).